We begin with the raw amino-acid sequence, 237 residues long: uncharacterized protein (237 aa).

Residues 53–70 form a helical membrane-spanning segment; that stretch reads LIFLATVLAGLILFYFGV. The tract at residues 85 to 155 is disordered; the sequence is PPIVIKPVAP…TQEKKDVKVA (71 aa). Residues 98–157 adopt a coiled-coil conformation; the sequence is KTQESNQTTKKEVKQEEQKKEEPKKMVQKQETQEKREVKKSEKNEVKQTQEKKDVKVAKK. Composition is skewed to basic and acidic residues over residues 106–122 and 128–155; these read TKKE…EPKK and ETQE…VKVA. The region spanning 165 to 237 is the SPOR domain; sequence AANLRTYKFQ…HFKDAIFVRK (73 aa).

It is found in the membrane. This is an uncharacterized protein from Aquifex aeolicus (strain VF5).